The primary structure comprises 563 residues: NAD-dependent malic enzyme (563 aa).

The active-site Proton donor is Tyr-101. Arg-154 contacts NAD(+). Lys-172 functions as the Proton acceptor in the catalytic mechanism. Residues Glu-243, Asp-244, and Asp-267 each contribute to the a divalent metal cation site. The NAD(+) site is built by Asp-267 and Asn-416.

Belongs to the malic enzymes family. As to quaternary structure, homotetramer. Mg(2+) serves as cofactor. The cofactor is Mn(2+).

The catalysed reaction is (S)-malate + NAD(+) = pyruvate + CO2 + NADH. It carries out the reaction oxaloacetate + H(+) = pyruvate + CO2. This chain is NAD-dependent malic enzyme, found in Pseudomonas syringae pv. syringae (strain B728a).